The following is a 302-amino-acid chain: Zinc import ATP-binding protein ZnuC (302 aa).

The region spanning Val-13–Arg-228 is the ABC transporter domain. Gly-45–Ser-52 is a binding site for ATP.

It belongs to the ABC transporter superfamily. Zinc importer (TC 3.A.1.15.5) family. As to quaternary structure, the complex is composed of two ATP-binding proteins (ZnuC), two transmembrane proteins (ZnuB) and a solute-binding protein (ZnuA).

It localises to the cell inner membrane. The enzyme catalyses Zn(2+)(out) + ATP(in) + H2O(in) = Zn(2+)(in) + ADP(in) + phosphate(in) + H(+)(in). Its function is as follows. Part of the ABC transporter complex ZnuABC involved in zinc import. Responsible for energy coupling to the transport system. The protein is Zinc import ATP-binding protein ZnuC of Rhizobium meliloti (strain 1021) (Ensifer meliloti).